A 646-amino-acid polypeptide reads, in one-letter code: Replication protein E1 (646 aa).

Positions 83-85 (KRK) match the Nuclear localization signal motif. Residues Ser-89, Ser-93, and Ser-107 each carry the phosphoserine; by host modification. The Nuclear export signal motif lies at 106–115 (ISPRLDAIKL). The segment at 145 to 185 (ETQVERNGEPENDCGGGGHGRDKEGEGQVHTEVHTGSQIEE) is disordered. The segment covering 163–185 (HGRDKEGEGQVHTEVHTGSQIEE) has biased composition (basic and acidic residues). Residues 184-350 (EEHTGTTRVL…QTIVEHGLAD (167 aa)) form a DNA-binding region region. One can recognise an SF3 helicase domain in the interval 449-599 (IEFIPFLSKL…FPFDRNGNAV (151 aa)). Position 475-482 (475-482 (GPPDTGKS)) interacts with ATP. Lys-556 is covalently cross-linked (Glycyl lysine isopeptide (Lys-Gly) (interchain with G-Cter in SUMO)).

The protein belongs to the papillomaviridae E1 protein family. As to quaternary structure, can form hexamers. Interacts with E2 protein; this interaction increases E1 DNA binding specificity. Interacts with host DNA polymerase subunit POLA2. Interacts with host single stranded DNA-binding protein RPA1. Interacts with host TOP1; this interaction stimulates the enzymatic activity of TOP1. In terms of processing, phosphorylated. Sumoylated.

The protein resides in the host nucleus. It carries out the reaction Couples ATP hydrolysis with the unwinding of duplex DNA by translocating in the 3'-5' direction.. The enzyme catalyses ATP + H2O = ADP + phosphate + H(+). In terms of biological role, ATP-dependent DNA 3'-5' helicase required for initiation of viral DNA replication. It forms a complex with the viral E2 protein. The E1-E2 complex binds to the replication origin which contains binding sites for both proteins. During the initial step, a dimer of E1 interacts with a dimer of protein E2 leading to a complex that binds the viral origin of replication with high specificity. Then, a second dimer of E1 displaces the E2 dimer in an ATP-dependent manner to form the E1 tetramer. Following this, two E1 monomers are added to each half of the site, which results in the formation of two E1 trimers on the viral ori. Subsequently, two hexamers will be created. The double hexamer acts as a bi-directional helicase machinery and unwinds the viral DNA and then recruits the host DNA polymerase to start replication. This chain is Replication protein E1, found in Homo sapiens (Human).